Reading from the N-terminus, the 405-residue chain is Imidazolonepropionase (405 aa).

2 residues coordinate Fe(3+): histidine 73 and histidine 75. 2 residues coordinate Zn(2+): histidine 73 and histidine 75. 4-imidazolone-5-propanoate contacts are provided by arginine 82, tyrosine 145, and histidine 178. Position 145 (tyrosine 145) interacts with N-formimidoyl-L-glutamate. Residue histidine 243 participates in Fe(3+) binding. Histidine 243 serves as a coordination point for Zn(2+). Residue glutamine 246 participates in 4-imidazolone-5-propanoate binding. Aspartate 318 contributes to the Fe(3+) binding site. Aspartate 318 is a binding site for Zn(2+). Residues asparagine 320 and glycine 322 each contribute to the N-formimidoyl-L-glutamate site. Residue threonine 323 participates in 4-imidazolone-5-propanoate binding.

The protein belongs to the metallo-dependent hydrolases superfamily. HutI family. Zn(2+) serves as cofactor. Fe(3+) is required as a cofactor.

It localises to the cytoplasm. It carries out the reaction 4-imidazolone-5-propanoate + H2O = N-formimidoyl-L-glutamate. The protein operates within amino-acid degradation; L-histidine degradation into L-glutamate; N-formimidoyl-L-glutamate from L-histidine: step 3/3. Catalyzes the hydrolytic cleavage of the carbon-nitrogen bond in imidazolone-5-propanoate to yield N-formimidoyl-L-glutamate. It is the third step in the universal histidine degradation pathway. This Brucella abortus (strain S19) protein is Imidazolonepropionase.